A 451-amino-acid chain; its full sequence is Probable tyrosyl-DNA phosphodiesterase (451 aa).

Residues 1-34 are disordered; it reads MKRTIQETPGPSSTTVPPPKKLNSQRNGSNLEPG. Residues 22–32 are compositionally biased toward polar residues; that stretch reads LNSQRNGSNLE. The active-site Nucleophile is the His131. Lys133 contacts substrate. The segment at 266–269 is interaction with DNA; the sequence is SIGS. The active-site Proton donor/acceptor is His356. Residue Lys358 participates in substrate binding.

Belongs to the tyrosyl-DNA phosphodiesterase family.

It localises to the nucleus. DNA repair enzyme that can remove a variety of covalent adducts from DNA through hydrolysis of a 3'-phosphodiester bond, giving rise to DNA with a free 3' phosphate. Catalyzes the hydrolysis of dead-end complexes between DNA and the topoisomerase I active site tyrosine residue. Hydrolyzes 3'-phosphoglycolates on protruding 3' ends on DNA double-strand breaks due to DNA damage by radiation and free radicals. Acts on blunt-ended double-strand DNA breaks and on single-stranded DNA. May have low 3'exonuclease activity and may be able to remove a single nucleoside from the 3'end of DNA and RNA molecules with 3'hydroxyl groups. Has no exonuclease activity towards DNA or RNA with a 3'phosphate. This Caenorhabditis elegans protein is Probable tyrosyl-DNA phosphodiesterase.